A 1150-amino-acid chain; its full sequence is ATP-dependent helicase/deoxyribonuclease subunit B (1150 aa).

8–15 (GRAGSGKS) contributes to the ATP binding site. 4 residues coordinate [4Fe-4S] cluster: Cys-786, Cys-1106, Cys-1109, and Cys-1115.

This sequence belongs to the helicase family. AddB/RexB type 1 subfamily. In terms of assembly, heterodimer of AddA and AddB. Mg(2+) is required as a cofactor. The cofactor is [4Fe-4S] cluster.

Functionally, the heterodimer acts as both an ATP-dependent DNA helicase and an ATP-dependent, dual-direction single-stranded exonuclease. Recognizes the chi site generating a DNA molecule suitable for the initiation of homologous recombination. The AddB subunit has 5' -&gt; 3' nuclease activity but not helicase activity. The chain is ATP-dependent helicase/deoxyribonuclease subunit B from Clostridium botulinum (strain Langeland / NCTC 10281 / Type F).